The primary structure comprises 425 residues: Trigger factor (425 aa).

The PPIase FKBP-type domain occupies 163 to 248; the sequence is GDTAVIDFEG…IHEIKTKELP (86 aa).

It belongs to the FKBP-type PPIase family. Tig subfamily.

The protein localises to the cytoplasm. It catalyses the reaction [protein]-peptidylproline (omega=180) = [protein]-peptidylproline (omega=0). Its function is as follows. Involved in protein export. Acts as a chaperone by maintaining the newly synthesized protein in an open conformation. Functions as a peptidyl-prolyl cis-trans isomerase. The protein is Trigger factor of Bacillus cereus (strain G9842).